The chain runs to 234 residues: Large ribosomal subunit protein bL25 (234 aa).

The interval 1–24 (MATVMELKATARPKSGKGAARAER) is disordered.

The protein belongs to the bacterial ribosomal protein bL25 family. CTC subfamily. In terms of assembly, part of the 50S ribosomal subunit; part of the 5S rRNA/L5/L18/L25 subcomplex. Contacts the 5S rRNA. Binds to the 5S rRNA independently of L5 and L18.

Functionally, this is one of the proteins that binds to the 5S RNA in the ribosome where it forms part of the central protuberance. The sequence is that of Large ribosomal subunit protein bL25 from Rhodopseudomonas palustris (strain BisB5).